The primary structure comprises 397 residues: Purine ribonucleoside efflux pump NepI (397 aa).

Residues methionine 1 to alanine 21 are Cytoplasmic-facing. The helical transmembrane segment at valine 22 to leucine 42 threads the bilayer. Residues leucine 43 to glutamate 54 are Periplasmic-facing. A helical transmembrane segment spans residues glycine 55 to isoleucine 75. The Cytoplasmic portion of the chain corresponds to threonine 76–arginine 85. Residues tyrosine 86–asparagine 106 traverse the membrane as a helical segment. A topological domain (periplasmic) is located at residue serine 107. The chain crosses the membrane as a helical span at residues phenylalanine 108 to methionine 128. Residues serine 129–serine 147 are Cytoplasmic-facing. The chain crosses the membrane as a helical span at residues valine 148 to glycine 168. The Periplasmic portion of the chain corresponds to glycine 169–asparagine 175. A helical membrane pass occupies residues valine 176–proline 196. At serine 197–arginine 215 the chain is on the cytoplasmic side. A helical transmembrane segment spans residues proline 216–phenylalanine 236. The Periplasmic portion of the chain corresponds to threonine 237–threonine 255. Residues leucine 256–leucine 276 form a helical membrane-spanning segment. At lysine 277 to lysine 281 the chain is on the cytoplasmic side. A helical membrane pass occupies residues leucine 282–glycine 302. Over serine 303 to lysine 305 the chain is Periplasmic. A helical transmembrane segment spans residues threonine 306–tryptophan 326. At serine 327–serine 343 the chain is on the cytoplasmic side. The chain crosses the membrane as a helical span at residues isoleucine 344–leucine 364. Topologically, residues aspartate 365–asparagine 366 are periplasmic. A helical membrane pass occupies residues phenylalanine 367 to valine 387. Residues alanine 388–serine 397 are Cytoplasmic-facing.

The protein belongs to the major facilitator superfamily. DHA1 family. NepI (TC 2.A.1.2.26) subfamily.

It localises to the cell inner membrane. It carries out the reaction inosine(in) + H(+)(out) = inosine(out) + H(+)(in). The catalysed reaction is guanosine(in) + H(+)(out) = guanosine(out) + H(+)(in). In terms of biological role, involved in the efflux of purine ribonucleosides, such as inosine and guanosine. This chain is Purine ribonucleoside efflux pump NepI, found in Salmonella choleraesuis (strain SC-B67).